We begin with the raw amino-acid sequence, 391 residues long: Uroporphyrinogen decarboxylase, chloroplastic (391 aa).

Substrate-binding positions include 71 to 75, Phe90, Ser120, Asp121, Tyr198, Ser253, and His368; that span reads RQAGR.

This sequence belongs to the uroporphyrinogen decarboxylase family. In terms of assembly, homodimer.

The protein resides in the plastid. The protein localises to the chloroplast. It catalyses the reaction uroporphyrinogen III + 4 H(+) = coproporphyrinogen III + 4 CO2. Its pathway is porphyrin-containing compound metabolism; protoporphyrin-IX biosynthesis; coproporphyrinogen-III from 5-aminolevulinate: step 4/4. Functionally, catalyzes the decarboxylation of four acetate groups of uroporphyrinogen-III to yield coproporphyrinogen-III. The chain is Uroporphyrinogen decarboxylase, chloroplastic (DCUP) from Nicotiana tabacum (Common tobacco).